The sequence spans 255 residues: Hydroxyethylthiazole kinase (255 aa).

Methionine 38 is a binding site for substrate. Arginine 114 and threonine 160 together coordinate ATP. Glycine 187 provides a ligand contact to substrate.

It belongs to the Thz kinase family. Mg(2+) is required as a cofactor.

The enzyme catalyses 5-(2-hydroxyethyl)-4-methylthiazole + ATP = 4-methyl-5-(2-phosphooxyethyl)-thiazole + ADP + H(+). It functions in the pathway cofactor biosynthesis; thiamine diphosphate biosynthesis; 4-methyl-5-(2-phosphoethyl)-thiazole from 5-(2-hydroxyethyl)-4-methylthiazole: step 1/1. Catalyzes the phosphorylation of the hydroxyl group of 4-methyl-5-beta-hydroxyethylthiazole (THZ). The chain is Hydroxyethylthiazole kinase from Lysinibacillus sphaericus (strain C3-41).